The following is a 78-amino-acid chain: Small ribosomal subunit protein bS18 (78 aa).

It belongs to the bacterial ribosomal protein bS18 family. As to quaternary structure, part of the 30S ribosomal subunit. Forms a tight heterodimer with protein bS6.

Functionally, binds as a heterodimer with protein bS6 to the central domain of the 16S rRNA, where it helps stabilize the platform of the 30S subunit. The sequence is that of Small ribosomal subunit protein bS18 from Kineococcus radiotolerans (strain ATCC BAA-149 / DSM 14245 / SRS30216).